The following is a 945-amino-acid chain: Oxysterol-binding protein homolog C23H4.01c (945 aa).

A GOLD domain is found at Met1–Ala131. Residues Lys149–Asn243 enclose the PH domain. Phosphoserine occurs at positions 288, 419, and 421. 2 disordered regions span residues Glu396–Ser555 and Leu846–Lys894. Positions Thr443 to Ser454 are enriched in low complexity. Positions Leu460–Asp470 are enriched in polar residues. Residues Glu482–Met499 show a composition bias toward basic and acidic residues. Phosphoserine is present on Ser503.

Belongs to the OSBP family.

It is found in the cytoplasm. This chain is Oxysterol-binding protein homolog C23H4.01c, found in Schizosaccharomyces pombe (strain 972 / ATCC 24843) (Fission yeast).